Here is a 204-residue protein sequence, read N- to C-terminus: Synaptosomal-associated protein 25-A (204 aa).

Residues 1-11 (MAEDADMRNEL) are compositionally biased toward basic and acidic residues. Residues 1–25 (MAEDADMRNELSDMQQRADQLADES) are disordered. 2 consecutive t-SNARE coiled-coil homology domains span residues 19-81 (DQLA…LNDL) and 138-200 (DARE…ATKM).

It belongs to the SNAP-25 family.

The protein localises to the synapse. Its subcellular location is the synaptosome. The protein resides in the cell membrane. May play an important role in the synaptic function of specific neuronal systems. Associates with proteins involved in vesicle docking and membrane fusion. This is Synaptosomal-associated protein 25-A (snap25a) from Carassius auratus (Goldfish).